The following is a 123-amino-acid chain: rRNA-processing protein cgr-1 (123 aa).

The span at M1–Q13 shows a compositional bias: low complexity. 2 disordered regions span residues M1–S47 and E85–S123. Positions E49 to R110 form a coiled coil. Residues E85 to K102 show a composition bias toward basic and acidic residues. A compositionally biased stretch (basic residues) spans M103 to S123.

Belongs to the CGR1 family.

The protein resides in the nucleus. The protein localises to the nucleolus. Involved in nucleolar integrity and required for processing of the pre-rRNA for the 60S ribosome subunit. The protein is rRNA-processing protein cgr-1 (cgr-1) of Neurospora crassa (strain ATCC 24698 / 74-OR23-1A / CBS 708.71 / DSM 1257 / FGSC 987).